The chain runs to 658 residues: Glycogen debranching enzyme (658 aa).

Asp336 (nucleophile) is an active-site residue. Glu371 (proton donor) is an active-site residue. Positions 459–484 (EANGEENRDGTNSNYSDNHGKEGLGG) are disordered.

It belongs to the glycosyl hydrolase 13 family.

The enzyme catalyses Hydrolysis of (1-&gt;6)-alpha-D-glucosidic linkages to branches with degrees of polymerization of three or four glucose residues in limit dextrin.. It participates in glycan degradation; glycogen degradation. In terms of biological role, removes maltotriose and maltotetraose chains that are attached by 1,6-alpha-linkage to the limit dextrin main chain, generating a debranched limit dextrin. In Salmonella choleraesuis (strain SC-B67), this protein is Glycogen debranching enzyme.